The primary structure comprises 462 residues: MSKLWGGRFTEEAEAWVEEFGASISFDQQLVNQDINGSIAHVTMLAKQGIVTKEEAEKIKIGLQYLLEEAKQNKLNFSVEAEDIHLNIEKMLIEKIGEVGGKLHTGRSRNDQVATDMHLYLKEKVEHIMKATKQLQTVLVHQAENNIETIMPGYTHLQRAQPISFAHHILAYFWMLERDVNRYEDSLKRINISPLGAGALAGTTFPIDREYSAELLGFNGIYENSLDAVSDRDFILEFLSNSSILMMHLSRFCEELILWSSQEFQFIEMSDQYATGSSIMPQKKNPDMAELIRGKTGRVYGNLFSLLTVMKGLPLAYNKDLQEDKEGMFDTVKTVEGCLHIMAGMLETMTVNKEKMGQAVTQDFSNATEIADYLASKGLPFRQAHEIVGKLVLHCTQKGIYLVDVPLETYKEMSSLFEEDLYEVLSPYAAVKRRNSAGGTGFEQIEKALEKAKGLTKEAIKN.

Belongs to the lyase 1 family. Argininosuccinate lyase subfamily.

It localises to the cytoplasm. It carries out the reaction 2-(N(omega)-L-arginino)succinate = fumarate + L-arginine. The protein operates within amino-acid biosynthesis; L-arginine biosynthesis; L-arginine from L-ornithine and carbamoyl phosphate: step 3/3. The polypeptide is Argininosuccinate lyase (Bacillus cereus (strain ZK / E33L)).